Consider the following 370-residue polypeptide: Nodulation protein Z (370 aa).

In terms of domain architecture, GT23 spans 47–361 (SSNDRFVVSR…NDPGRLILIE (315 aa)).

This sequence belongs to the glycosyltransferase 23 family.

Its function is as follows. Fucosyltransferase which adds the fucose moiety of the nod factor on its terminal reducing N-acetylglucosamine end. Uses GDP-fucose as the donor group. The protein is Nodulation protein Z (nodZ) of Bradyrhizobium diazoefficiens (strain JCM 10833 / BCRC 13528 / IAM 13628 / NBRC 14792 / USDA 110).